The sequence spans 151 residues: Large ribosomal subunit protein uL22 (151 aa).

This sequence belongs to the universal ribosomal protein uL22 family. Part of the 50S ribosomal subunit.

In terms of biological role, this protein binds specifically to 23S rRNA. It makes multiple contacts with different domains of the 23S rRNA in the assembled 50S subunit and ribosome. The globular domain of the protein is located near the polypeptide exit tunnel on the outside of the subunit, while an extended beta-hairpin is found that lines the wall of the exit tunnel in the center of the 70S ribosome. This chain is Large ribosomal subunit protein uL22, found in Methanococcoides burtonii (strain DSM 6242 / NBRC 107633 / OCM 468 / ACE-M).